Consider the following 116-residue polypeptide: Translation initiation factor 1A (116 aa).

The interval 1-25 (MRCLSKKHQKQGDEHGGEIPLPNPD) is disordered. The S1-like domain occupies 17–91 (GEIPLPNPDE…EKGEVVYKYG (75 aa)).

Belongs to the eIF-1A family.

Functionally, seems to be required for maximal rate of protein biosynthesis. Enhances ribosome dissociation into subunits and stabilizes the binding of the initiator Met-tRNA(I) to 40 S ribosomal subunits. This Desulfurococcus amylolyticus (strain DSM 18924 / JCM 16383 / VKM B-2413 / 1221n) (Desulfurococcus kamchatkensis) protein is Translation initiation factor 1A (eIF1A).